A 106-amino-acid chain; its full sequence is Large ribosomal subunit protein uL24 (106 aa).

Belongs to the universal ribosomal protein uL24 family. Part of the 50S ribosomal subunit.

In terms of biological role, one of two assembly initiator proteins, it binds directly to the 5'-end of the 23S rRNA, where it nucleates assembly of the 50S subunit. Functionally, one of the proteins that surrounds the polypeptide exit tunnel on the outside of the subunit. In Acidiphilium cryptum (strain JF-5), this protein is Large ribosomal subunit protein uL24.